The sequence spans 420 residues: MAPRSSRGIAPAMLCGLSLFLGFPGLVWVQISVPPQSSPHTEPHPCHTCRGLVDSFNKGLERTIRDNFGGGNTAWEEEKLSKYKDSETRLVEVLEGVCSKSDFECHRLLELSEELVESWWFHKQQEAPDLFQWLCSDSLKLCCPSGTFGPSCLPCPGGAERPCGGYGHCEGEGTRGGSGHCDCQAGYGGEACGQCGLGYFEAERNASHLVCSACFGPCARCSGPEESHCLQCKKGWALHHLKCVDIDECGTERASCGADQFCVNTEGSYECRDCAKACLGCMGAGPGRCKKCSPGYQQVGSKCLDVDECETAVCPGENQQCENTEGSYRCICADGYKQMEGICVKDQIPESAGFFSEMTEDELVVLQQMFFGVIICALATLAAKGDLVFTAIFIGAVAAMTGYWLSERSDRVLEGFIKGR.

An N-terminal signal peptide occupies residues 1 to 29 (MAPRSSRGIAPAMLCGLSLFLGFPGLVWV). The Extracellular segment spans residues 30 to 362 (QISVPPQSSP…GFFSEMTEDE (333 aa)). Positions 46-49 (CHTC) match the CXXC motif. 4 disulfides stabilise this stretch: C46/C49, C155/C169, C163/C181, and C183/C192. One can recognise an EGF-like 1 domain in the interval 153-193 (LPCPGGAERPCGGYGHCEGEGTRGGSGHCDCQAGYGGEACG). N205 carries an N-linked (GlcNAc...) asparagine glycan. 2 FU repeats span residues 208–255 (HLVC…ERAS) and 268–315 (SYEC…AVCP). Residues 278-281 (CLGC) carry the CXXC motif. Cystine bridges form between C278-C281, C309-C321, C314-C330, and C332-C343. Residues 305 to 344 (DVDECETAVCPGENQQCENTEGSYRCICADGYKQMEGICV) enclose the EGF-like 2; calcium-binding domain. A helical transmembrane segment spans residues 363-383 (LVVLQQMFFGVIICALATLAA). A topological domain (cytoplasmic) is located at residue K384. The helical transmembrane segment at 385–405 (GDLVFTAIFIGAVAAMTGYWL) threads the bilayer. The Extracellular portion of the chain corresponds to 406–420 (SERSDRVLEGFIKGR).

It belongs to the CRELD family.

It localises to the membrane. The enzyme catalyses Catalyzes the rearrangement of -S-S- bonds in proteins.. Its function is as follows. Protein disulfide isomerase. Promotes the localization of acetylcholine receptors (AChRs) to the plasma membrane. This is Protein disulfide isomerase CRELD1 (CRELD1) from Bos taurus (Bovine).